The primary structure comprises 492 residues: Catalase isozyme 1 (492 aa).

Active-site residues include His65 and Asn138. Residue Tyr348 participates in heme binding.

It belongs to the catalase family. In terms of assembly, homotetramer. The cofactor is heme.

It is found in the cytoplasm. It localises to the cytosol. The protein resides in the peroxisome matrix. It carries out the reaction 2 H2O2 = O2 + 2 H2O. Its activity is regulated as follows. Inhibited by salicylic acid. In terms of biological role, catalyzes the degradation of hydrogen peroxide (H(2)O(2)) generated by peroxisomal oxidases to water and oxygen, thereby protecting cells from the toxic effects of hydrogen peroxide. The polypeptide is Catalase isozyme 1 (CAT-1) (Nicotiana tabacum (Common tobacco)).